We begin with the raw amino-acid sequence, 94 residues long: MAVLTDDQVDAALPELGGWERADGVLRRSVKFPAFLDGIEAVRRVAERAEAKDHHPDIDIRWRTVTFVLVTHSEGGITEKDLQMAREIDEILDR.

Belongs to the pterin-4-alpha-carbinolamine dehydratase family.

The enzyme catalyses (4aS,6R)-4a-hydroxy-L-erythro-5,6,7,8-tetrahydrobiopterin = (6R)-L-erythro-6,7-dihydrobiopterin + H2O. The sequence is that of Putative pterin-4-alpha-carbinolamine dehydratase from Mycobacterium sp. (strain JLS).